The chain runs to 172 residues: ATP synthase subunit b (172 aa).

Residues Leu27–Glu47 form a helical membrane-spanning segment.

This sequence belongs to the ATPase B chain family. As to quaternary structure, F-type ATPases have 2 components, F(1) - the catalytic core - and F(0) - the membrane proton channel. F(1) has five subunits: alpha(3), beta(3), gamma(1), delta(1), epsilon(1). F(0) has four main subunits: a(1), b(1), b'(1) and c(10-14). The alpha and beta chains form an alternating ring which encloses part of the gamma chain. F(1) is attached to F(0) by a central stalk formed by the gamma and epsilon chains, while a peripheral stalk is formed by the delta, b and b' chains.

The protein localises to the cellular thylakoid membrane. Functionally, f(1)F(0) ATP synthase produces ATP from ADP in the presence of a proton or sodium gradient. F-type ATPases consist of two structural domains, F(1) containing the extramembraneous catalytic core and F(0) containing the membrane proton channel, linked together by a central stalk and a peripheral stalk. During catalysis, ATP synthesis in the catalytic domain of F(1) is coupled via a rotary mechanism of the central stalk subunits to proton translocation. Component of the F(0) channel, it forms part of the peripheral stalk, linking F(1) to F(0). This Prochlorococcus marinus (strain MIT 9313) protein is ATP synthase subunit b.